Here is an 85-residue protein sequence, read N- to C-terminus: ATP synthase subunit c (85 aa).

The next 2 membrane-spanning stretches (helical) occupy residues isoleucine 10 to leucine 30 and phenylalanine 53 to phenylalanine 73.

Belongs to the ATPase C chain family. In terms of assembly, F-type ATPases have 2 components, F(1) - the catalytic core - and F(0) - the membrane proton channel. F(1) has five subunits: alpha(3), beta(3), gamma(1), delta(1), epsilon(1). F(0) has three main subunits: a(1), b(2) and c(10-14). The alpha and beta chains form an alternating ring which encloses part of the gamma chain. F(1) is attached to F(0) by a central stalk formed by the gamma and epsilon chains, while a peripheral stalk is formed by the delta and b chains.

Its subcellular location is the cell inner membrane. Its function is as follows. F(1)F(0) ATP synthase produces ATP from ADP in the presence of a proton or sodium gradient. F-type ATPases consist of two structural domains, F(1) containing the extramembraneous catalytic core and F(0) containing the membrane proton channel, linked together by a central stalk and a peripheral stalk. During catalysis, ATP synthesis in the catalytic domain of F(1) is coupled via a rotary mechanism of the central stalk subunits to proton translocation. Functionally, key component of the F(0) channel; it plays a direct role in translocation across the membrane. A homomeric c-ring of between 10-14 subunits forms the central stalk rotor element with the F(1) delta and epsilon subunits. This chain is ATP synthase subunit c, found in Pseudomonas aeruginosa (strain LESB58).